Consider the following 167-residue polypeptide: Large ribosomal subunit protein uL10 (167 aa).

It belongs to the universal ribosomal protein uL10 family. As to quaternary structure, part of the ribosomal stalk of the 50S ribosomal subunit. The N-terminus interacts with L11 and the large rRNA to form the base of the stalk. The C-terminus forms an elongated spine to which L12 dimers bind in a sequential fashion forming a multimeric L10(L12)X complex.

Its function is as follows. Forms part of the ribosomal stalk, playing a central role in the interaction of the ribosome with GTP-bound translation factors. In Mycoplasma mobile (strain ATCC 43663 / 163K / NCTC 11711) (Mesomycoplasma mobile), this protein is Large ribosomal subunit protein uL10.